Reading from the N-terminus, the 302-residue chain is Probable alpha-L-glutamate ligase (302 aa).

An ATP-grasp domain is found at 112–294 (LQLLLKAGIP…IAAEIIDYIE (183 aa)). ATP is bound by residues Lys-148, 185-186 (DF), Asp-194, and 218-220 (RAN). Mg(2+) is bound by residues Asp-255, Glu-267, and Asn-269. Positions 255, 267, and 269 each coordinate Mn(2+).

Belongs to the RimK family. Requires Mg(2+) as cofactor. Mn(2+) is required as a cofactor.

This is Probable alpha-L-glutamate ligase from Haemophilus influenzae (strain ATCC 51907 / DSM 11121 / KW20 / Rd).